We begin with the raw amino-acid sequence, 496 residues long: Probable cytosol aminopeptidase (496 aa).

The Mn(2+) site is built by lysine 258 and aspartate 263. Residue lysine 270 is part of the active site. Mn(2+)-binding residues include aspartate 281, aspartate 340, and glutamate 342. The active site involves arginine 344.

Belongs to the peptidase M17 family. The cofactor is Mn(2+).

Its subcellular location is the cytoplasm. It catalyses the reaction Release of an N-terminal amino acid, Xaa-|-Yaa-, in which Xaa is preferably Leu, but may be other amino acids including Pro although not Arg or Lys, and Yaa may be Pro. Amino acid amides and methyl esters are also readily hydrolyzed, but rates on arylamides are exceedingly low.. The catalysed reaction is Release of an N-terminal amino acid, preferentially leucine, but not glutamic or aspartic acids.. Presumably involved in the processing and regular turnover of intracellular proteins. Catalyzes the removal of unsubstituted N-terminal amino acids from various peptides. The sequence is that of Probable cytosol aminopeptidase from Helicobacter pylori (strain Shi470).